A 296-amino-acid chain; its full sequence is tRNA dimethylallyltransferase (296 aa).

8 to 15 contributes to the ATP binding site; the sequence is GPTGSGKT. A substrate-binding site is contributed by 10–15; the sequence is TGSGKT. Positions 32–35 are interaction with substrate tRNA; that stretch reads DSRQ.

This sequence belongs to the IPP transferase family. Monomer. Mg(2+) is required as a cofactor.

The catalysed reaction is adenosine(37) in tRNA + dimethylallyl diphosphate = N(6)-dimethylallyladenosine(37) in tRNA + diphosphate. Catalyzes the transfer of a dimethylallyl group onto the adenine at position 37 in tRNAs that read codons beginning with uridine, leading to the formation of N6-(dimethylallyl)adenosine (i(6)A). This Leptospira biflexa serovar Patoc (strain Patoc 1 / Ames) protein is tRNA dimethylallyltransferase.